Reading from the N-terminus, the 708-residue chain is Lactotransferrin (708 aa).

The N-terminal stretch at 1-19 (MKLFVPALLSLGALGLCLA) is a signal peptide. 2 consecutive Transferrin-like domains span residues 25–352 (VRWC…NLRE) and 364–693 (VVWC…NLKK). 2 disulfides stabilise this stretch: Cys28-Cys64 and Cys38-Cys55. A Fe cation-binding site is contributed by Asp79. Residue Lys92 is part of the active site. Tyr111 is a binding site for Fe cation. 5 cysteine pairs are disulfide-bonded: Cys134–Cys217, Cys176–Cys192, Cys179–Cys202, Cys189–Cys200, and Cys250–Cys264. Hydrogencarbonate is bound by residues Thr136, Arg140, Ala142, and Gly143. Tyr211 is a Fe cation binding site. A glycan (N-linked (GlcNAc...) (high mannose) asparagine) is linked at Asn252. Residue His272 coordinates Fe cation. Ser278 serves as the catalytic Nucleophile. The N-linked (GlcNAc...) (hybrid) asparagine glycan is linked to Asn300. Cystine bridges form between Cys367-Cys399 and Cys377-Cys390. Residues Asp414 and Tyr452 each coordinate Fe cation. Intrachain disulfides connect Cys424–Cys703, Cys444–Cys666, Cys476–Cys551, Cys500–Cys694, Cys510–Cys524, Cys521–Cys534, Cys592–Cys606, and Cys644–Cys649. Residues Thr478, Arg482, Ala484, and Gly485 each contribute to the hydrogencarbonate site. Asn495 is a glycosylation site (N-linked (GlcNAc...) (complex) asparagine; alternate). Asn495 carries an N-linked (GlcNAc...) (high mannose) asparagine; alternate glycan. The N-linked (GlcNAc...) (hybrid) asparagine; alternate glycan is linked to Asn495. Position 545 (Tyr545) interacts with Fe cation. Residue Asn564 is glycosylated (N-linked (GlcNAc...) (high mannose) asparagine). A Fe cation-binding site is contributed by His614.

The protein belongs to the transferrin family. Monomer. Found in a complex with LTF, CLU, EPPIN and SEMG1. Found in a complex with MPO and LTF; interacts directly with CP, allows Fe(3+) incorporation into LTF and activation of CP ferroxidase activity. Poly-N-acetyllactosaminic carbohydrate moiety seems to be needed for TLR4 activation.

It is found in the secreted. The protein localises to the cytoplasmic granule. Transferrins are iron binding transport proteins which can bind two Fe(3+) ions in association with the binding of an anion, usually bicarbonate. Functionally, major iron-binding and multifunctional protein found in exocrine fluids such as breast milk and mucosal secretions. Has antimicrobial activity, which depends on the extracellular cation concentration. Antimicrobial properties include bacteriostasis, which is related to its ability to sequester free iron and thus inhibit microbial growth, as well as direct bactericidal properties leading to the release of lipopolysaccharides from the bacterial outer membrane. Can also prevent bacterial biofilm development in P.aeruginosa infection. Has weak antifungal activity against C.albicans. Has anabolic, differentiating and anti-apoptotic effects on osteoblasts and can also inhibit osteoclastogenesis, possibly playing a role in the regulation of bone growth. Promotes binding of species C adenoviruses to epithelial cells, promoting adenovirus infection. Can inhibit papillomavirus infections. Stimulates the TLR4 signaling pathway leading to NF-kappa-B activation and subsequent pro-inflammatory cytokine production while also interfering with the lipopolysaccharide (LPS)-stimulated TLR4 signaling. Inhibits neutrophil granulocyte migration to sites of apoptosis, when secreted by apoptotic cells. Stimulates VEGFA-mediated endothelial cell migration and proliferation. Binds heparin, chondroitin sulfate and possibly other glycosaminoglycans (GAGs). Also binds specifically to pneumococcal surface protein A (PspA), the lipid A portion of bacterial lipopolysaccharide (LPS), lysozyme and DNA. In terms of biological role, lactoferricin binds to the bacterial surface and is crucial for the bactericidal functions. Has some antiviral activity against papillomavirus infection. N-terminal region shows strong antifungal activity against C.albicans. Contains two BBXB heparin-binding consensus sequences that appear to form the predominate functional GAG-binding site. Its function is as follows. The lactotransferrin transferrin-like domain 1 functions as a serine protease of the peptidase S60 family that cuts arginine rich regions. This function contributes to the antimicrobial activity. Shows a preferential cleavage at -Arg-Ser-Arg-Arg-|- and -Arg-Arg-Ser-Arg-|-, and of Z-Phe-Arg-|-aminomethylcoumarin sites. The sequence is that of Lactotransferrin (LTF) from Bubalus bubalis (Domestic water buffalo).